The following is a 262-amino-acid chain: S-methyl-5'-thioadenosine phosphorylase (262 aa).

Phosphate is bound by residues Ser12, 54–55 (RH), and 87–88 (SA). A substrate-binding site is contributed by Met185. A phosphate-binding site is contributed by Thr186. 209–211 (DYD) contacts substrate.

This sequence belongs to the PNP/MTAP phosphorylase family. MTAP subfamily. Homohexamer. Dimer of a homotrimer.

It carries out the reaction S-methyl-5'-thioadenosine + phosphate = 5-(methylsulfanyl)-alpha-D-ribose 1-phosphate + adenine. The protein operates within amino-acid biosynthesis; L-methionine biosynthesis via salvage pathway; S-methyl-5-thio-alpha-D-ribose 1-phosphate from S-methyl-5'-thioadenosine (phosphorylase route): step 1/1. Its function is as follows. Catalyzes the reversible phosphorylation of S-methyl-5'-thioadenosine (MTA) to adenine and 5-methylthioribose-1-phosphate. Involved in the breakdown of MTA, a major by-product of polyamine biosynthesis. Responsible for the first step in the methionine salvage pathway after MTA has been generated from S-adenosylmethionine. Has broad substrate specificity with 6-aminopurine nucleosides as preferred substrates. This Thermofilum pendens (strain DSM 2475 / Hrk 5) protein is S-methyl-5'-thioadenosine phosphorylase.